Here is a 249-residue protein sequence, read N- to C-terminus: 4-hydroxy-tetrahydrodipicolinate reductase (249 aa).

Residues 77 to 79 (ATT) and 101 to 104 (SYNT) each bind NAD(+). The Proton donor/acceptor role is filled by His-133. His-134 contributes to the (S)-2,3,4,5-tetrahydrodipicolinate binding site. Lys-137 serves as the catalytic Proton donor. A (S)-2,3,4,5-tetrahydrodipicolinate-binding site is contributed by 143–144 (GT).

It belongs to the DapB family.

The protein resides in the cytoplasm. It carries out the reaction (S)-2,3,4,5-tetrahydrodipicolinate + NAD(+) + H2O = (2S,4S)-4-hydroxy-2,3,4,5-tetrahydrodipicolinate + NADH + H(+). It catalyses the reaction (S)-2,3,4,5-tetrahydrodipicolinate + NADP(+) + H2O = (2S,4S)-4-hydroxy-2,3,4,5-tetrahydrodipicolinate + NADPH + H(+). Its pathway is amino-acid biosynthesis; L-lysine biosynthesis via DAP pathway; (S)-tetrahydrodipicolinate from L-aspartate: step 4/4. Functionally, catalyzes the conversion of 4-hydroxy-tetrahydrodipicolinate (HTPA) to tetrahydrodipicolinate. The protein is 4-hydroxy-tetrahydrodipicolinate reductase of Exiguobacterium sp. (strain ATCC BAA-1283 / AT1b).